The following is a 1194-amino-acid chain: Phosphatidylinositol-3,5-bisphosphate 3-phosphatase MTMR3 (1194 aa).

S4 carries the post-translational modification Phosphoserine. The Myotubularin phosphatase domain maps to 151–572; it reads EHVTSRFKNE…RNLMLWSAVY (422 aa). Residues N322, N347, and I348 each coordinate a 1,2-diacyl-sn-glycero-3-phospho-(1D-myo-inositol-3,5-bisphosphate). 3 residues coordinate a 1,2-diacyl-sn-glycero-3-phospho-(1D-myo-inositol-3-phosphate): N322, N347, and I348. The Phosphocysteine intermediate role is filled by C409. 8 residues coordinate a 1,2-diacyl-sn-glycero-3-phospho-(1D-myo-inositol-3,5-bisphosphate): S410, D411, G412, W413, D414, R415, K451, and R455. Positions 410, 411, 412, 413, 414, and 415 each coordinate a 1,2-diacyl-sn-glycero-3-phospho-(1D-myo-inositol-3-phosphate). R455 contacts a 1,2-diacyl-sn-glycero-3-phospho-(1D-myo-inositol-3-phosphate). Positions 583-609 are disordered; sequence DDSCAPYPAPGTSPDEPPLSRLPKTRS. Over residues 589–599 the composition is skewed to pro residues; that stretch reads YPAPGTSPDEP. A phosphoserine mark is found at S609, S629, S643, and S647. The span at 693–724 shows a compositional bias: basic and acidic residues; it reads TKEESGVEEPTHREHTEVPEVKEEAPLAKESR. 3 disordered regions span residues 693–731, 852–871, and 876–897; these read TKEE…QGSG, ESGP…RFSG, and PIAP…HRTS. T725 carries the phosphothreonine modification. S904 is modified (phosphoserine). 2 disordered regions span residues 932 to 971 and 988 to 1017; these read NKAS…HQLS and KWLN…DGMP. Residues 991 to 1006 are compositionally biased toward polar residues; that stretch reads NSHSGRPSTTNSPEQP. Residues 1025–1058 adopt a coiled-coil conformation; it reads QRLRQIESGHQQEVETLKKQVQELKSRLESQYLT. S1060 is subject to Phosphoserine. Residues 1115-1175 form an FYVE-type zinc finger; it reads DHLAAHCYAC…VCKSCYSSLH (61 aa). Residues C1121, C1124, C1137, C1140, C1145, C1148, C1167, and C1170 each contribute to the Zn(2+) site.

Belongs to the protein-tyrosine phosphatase family. Non-receptor class myotubularin subfamily. In terms of assembly, forms heterodimers with MTMR4 that recruit both CEP55 and PLK1; occurs during early mitosis, regulates the phosphorylation of CEP55 by PLK1 and its recruitment to the midbody where it mediates cell abscission.

It localises to the cytoplasm. Its subcellular location is the cytosol. The protein localises to the membrane. The enzyme catalyses a 1,2-diacyl-sn-glycero-3-phospho-(1D-myo-inositol-3,5-bisphosphate) + H2O = a 1,2-diacyl-sn-glycero-3-phospho-(1D-myo-inositol-5-phosphate) + phosphate. The catalysed reaction is a 1,2-diacyl-sn-glycero-3-phospho-(1D-myo-inositol-3-phosphate) + H2O = a 1,2-diacyl-sn-glycero-3-phospho-(1D-myo-inositol) + phosphate. It catalyses the reaction 1,2-dihexadecanoyl-sn-glycero-3-phospho-(1D-myo-inositol-3-phosphate) + H2O = 1,2-dihexadecanoyl-sn-glycero-3-phospho-(1D-myo-inositol) + phosphate. It carries out the reaction 1,2-dioctanoyl-sn-glycero-3-phospho-(1-D-myo-inositol-3-phosphate) + H2O = 1,2-dioctanoyl-sn-glycero-3-phospho-(1D-myo-inositol) + phosphate. The enzyme catalyses 1,2-dihexadecanoyl-sn-glycero-3-phospho-(1D-myo-inositol-3,5-phosphate) + H2O = 1,2-dihexadecanoyl-sn-glycero-3-phospho-(1D-myo-inositol-5-phosphate) + phosphate. Lipid phosphatase that specifically dephosphorylates the D-3 position of phosphatidylinositol 3-phosphate and phosphatidylinositol 3,5-bisphosphate, generating phosphatidylinositol and phosphatidylinositol 5-phosphate. Decreases the levels of phosphatidylinositol 3-phosphate, a phospholipid found in cell membranes where it acts as key regulator of both cell signaling and intracellular membrane traffic. Could also have a molecular sequestering/adapter activity and regulate biological processes independently of its phosphatase activity. It includes the regulation of midbody abscission during mitotic cytokinesis. This Rattus norvegicus (Rat) protein is Phosphatidylinositol-3,5-bisphosphate 3-phosphatase MTMR3.